The sequence spans 692 residues: UvrABC system protein B (692 aa).

The Helicase ATP-binding domain occupies 32–187 (ENIENGEKAQ…LLNDLVGIQF (156 aa)). An ATP-binding site is contributed by 45 to 52 (GATGTGKT). The Beta-hairpin signature appears at 98 to 121 (YYDYYQPEAYVPSSDTYIEKDSSV). The Helicase C-terminal domain maps to 436 to 631 (QIDDLVGEIH…TIKKEIRDLI (196 aa)). In terms of domain architecture, UVR spans 656–691 (KALVKKLEKEMQQAAAALDFEGAAQLRDMVLELRAM).

This sequence belongs to the UvrB family. Forms a heterotetramer with UvrA during the search for lesions. Interacts with UvrC in an incision complex.

The protein resides in the cytoplasm. Its function is as follows. The UvrABC repair system catalyzes the recognition and processing of DNA lesions. A damage recognition complex composed of 2 UvrA and 2 UvrB subunits scans DNA for abnormalities. Upon binding of the UvrA(2)B(2) complex to a putative damaged site, the DNA wraps around one UvrB monomer. DNA wrap is dependent on ATP binding by UvrB and probably causes local melting of the DNA helix, facilitating insertion of UvrB beta-hairpin between the DNA strands. Then UvrB probes one DNA strand for the presence of a lesion. If a lesion is found the UvrA subunits dissociate and the UvrB-DNA preincision complex is formed. This complex is subsequently bound by UvrC and the second UvrB is released. If no lesion is found, the DNA wraps around the other UvrB subunit that will check the other stand for damage. In Lactococcus lactis subsp. cremoris (strain SK11), this protein is UvrABC system protein B.